The following is a 424-amino-acid chain: Enolase (424 aa).

A (2R)-2-phosphoglycerate-binding site is contributed by Q165. E207 serves as the catalytic Proton donor. Positions 244, 283, and 310 each coordinate Mg(2+). Residues K335, R364, S365, and K386 each contribute to the (2R)-2-phosphoglycerate site. The Proton acceptor role is filled by K335.

This sequence belongs to the enolase family. The cofactor is Mg(2+).

The protein localises to the cytoplasm. The protein resides in the secreted. It localises to the cell surface. It carries out the reaction (2R)-2-phosphoglycerate = phosphoenolpyruvate + H2O. It participates in carbohydrate degradation; glycolysis; pyruvate from D-glyceraldehyde 3-phosphate: step 4/5. In terms of biological role, catalyzes the reversible conversion of 2-phosphoglycerate (2-PG) into phosphoenolpyruvate (PEP). It is essential for the degradation of carbohydrates via glycolysis. The sequence is that of Enolase from Chlamydia trachomatis serovar L2 (strain ATCC VR-902B / DSM 19102 / 434/Bu).